Reading from the N-terminus, the 234-residue chain is Phosphoglycolate phosphatase (234 aa).

Asp-15 functions as the Nucleophile in the catalytic mechanism. Asp-15, Asp-17, and Asp-177 together coordinate Mg(2+).

It belongs to the HAD-like hydrolase superfamily. CbbY/CbbZ/Gph/YieH family. As to quaternary structure, monomer. The cofactor is Mg(2+). Requires chloride as cofactor.

The enzyme catalyses 2-phosphoglycolate + H2O = glycolate + phosphate. The protein operates within organic acid metabolism; glycolate biosynthesis; glycolate from 2-phosphoglycolate: step 1/1. In terms of biological role, specifically catalyzes the dephosphorylation of 2-phosphoglycolate. Is involved in the dissimilation of the intracellular 2-phosphoglycolate formed during the DNA repair of 3'-phosphoglycolate ends, a major class of DNA lesions induced by oxidative stress. This Photorhabdus laumondii subsp. laumondii (strain DSM 15139 / CIP 105565 / TT01) (Photorhabdus luminescens subsp. laumondii) protein is Phosphoglycolate phosphatase.